A 504-amino-acid polypeptide reads, in one-letter code: Endosomal/lysosomal proton channel TMEM175 (504 aa).

Residues 1–27 (MSQPRTPEQALDTPGDCPPGRRDEDAG) form a disordered region. The Cytoplasmic segment spans residues 1-33 (MSQPRTPEQALDTPGDCPPGRRDEDAGEGIQCS). Threonine 6 carries the phosphothreonine modification. A helical transmembrane segment spans residues 34-56 (QRMLSFSDALLSIIATVMILPVT). The short motif at 35 to 41 (RMLSFSD) is the RxxxFSD motif 1 element. The Lumenal portion of the chain corresponds to 57 to 77 (HTEISPEQQFDRSVQRLLATR). The interval 58 to 63 (TEISPE) is short helix H1-1. Positions 65-71 (QFDRSVQ) are short helix H2-1. The helical transmembrane segment at 78–100 (IAVYLMTFLIVTVAWAAHTRLFQ) threads the bilayer. The Cytoplasmic segment spans residues 101-106 (VVGKTD). Residues 107-128 (DTLALLNLACMMTITFLPYTFS) traverse the membrane as a helical segment. Topologically, residues 129–138 (LMVTFPDVPL) are lumenal. A helical membrane pass occupies residues 139-160 (GIFLFCVCVIAIGVVQALIVGY). Topologically, residues 161 to 184 (AFHFPHLLSPQIQRSAHRALYRRH) are cytoplasmic. The chain crosses the membrane as a helical span at residues 185 to 205 (VLGIVLQGPALCFAAAIFSLF). Residues 206 to 210 (FVPLS) lie on the Lumenal side of the membrane. Residues 211 to 230 (YLLMVTVILLPYVSKVTGWC) traverse the membrane as a helical segment. Topologically, residues 231–257 (RDRLLGHREPSAHPVEVFSFDLHEPLS) are cytoplasmic. A helical transmembrane segment spans residues 258-282 (KERVEAFSDGVYAIVATLLILDICE). A RxxxFSD motif 2 motif is present at residues 260–266 (RVEAFSD). At 283–309 (DNVPDPKDVKERFSGSLVAALSATGPR) the chain is on the lumenal side. Residues 288–296 (PKDVKERFS) are short helix H1-2. Positions 298–304 (SLVAALS) are short helix H2-2. Residues 310–332 (FLAYFGSFATVGLLWFAHHSLFL) form a helical membrane-spanning segment. Residues 333 to 338 (HVRKAT) lie on the Cytoplasmic side of the membrane. A helical membrane pass occupies residues 339 to 360 (RAMGLLNTLSLAFVGGLPLAYQ). Residues 361-375 (QTSAFARQPRDELER) lie on the Lumenal side of the membrane. A helical transmembrane segment spans residues 376–396 (VRVSCTIIFLASIFQLAMWTT). Residues 397-416 (ALLHQAETLQPSVWFGGREH) are Cytoplasmic-facing. Residues 417-440 (VLMFAKLALYPCASLLAFASTCLL) traverse the membrane as a helical segment. Residues 441–442 (SR) are Lumenal-facing. The chain crosses the membrane as a helical span at residues 443–469 (FSVGIFHLMQIAVPCAFLLLRLLVGLA). Topologically, residues 470-504 (LATLRVLRGLARPEHPPPAPTGQDDPQSQLLPAPC) are cytoplasmic. A disordered region spans residues 483 to 504 (EHPPPAPTGQDDPQSQLLPAPC). The span at 493–504 (DDPQSQLLPAPC) shows a compositional bias: polar residues.

The protein belongs to the TMEM175 family. In terms of assembly, homodimer. Interacts with AKT (AKT1, AKT2 or AKT3); leading to formation of the lysoK(GF) complex, which activates the channel. Interacts with LAMP1; inhibiting the proton channel activity of TMEM175. Interacts with LAMP2; inhibiting the proton channel activity of TMEM175. As to expression, widely expressed.

Its subcellular location is the endosome membrane. The protein resides in the lysosome membrane. The catalysed reaction is H(+)(in) = H(+)(out). It catalyses the reaction K(+)(in) = K(+)(out). Active at low pH (under pH 4.6): proton channel activity is activated by luminal side protons. Polyunsaturated fatty acids, such as arachidonic acid, also activate the channel activity. Proton channel activity is directly inhibited by LAMP1 or LAMP2, facilitating lysosomal acidification. Channel activity is activated following interaction with AKT (AKT1, AKT2 or AKT3): interaction promotes activation from closed to an open state. Activation by AKT is independent of AKT serine/threonine-protein kinase activity. Functionally, proton-activated proton channel that catalyzes proton efflux from endosomes and lysosomes to maintain a steady-state pH. Activated at low pH (under pH 4.6) by luminal side protons: selectively mediates lysosomal proton release from lysosomes, eliciting a proton leak that balances V-ATPase activity to maintain pH homeostasis. Regulation of lumenal pH stability is required for autophagosome-lysosome fusion. Also acts as a potassium channel at higher pH, regulating potassium conductance in endosomes and lysosomes. Constitutes the pore-forming subunit of the lysoK(GF) complex, a complex activated by extracellular growth factors. The lysoK(GF) complex is composed of TMEM175 and AKT (AKT1, AKT2 or AKT3), a major target of growth factor receptors: in the complex, TMEM175 channel is opened by conformational changes by AKT, leading to its activation. The lysoK(GF) complex is required to protect neurons against stress-induced damage. This Homo sapiens (Human) protein is Endosomal/lysosomal proton channel TMEM175.